The chain runs to 496 residues: 3-octaprenyl-4-hydroxybenzoate carboxy-lyase (496 aa).

Asparagine 181 contacts Mn(2+). Prenylated FMN is bound by residues 184–186 (IYR), 198–200 (RWL), and 203–204 (RG). Position 247 (glutamate 247) interacts with Mn(2+). Catalysis depends on aspartate 296, which acts as the Proton donor.

It belongs to the UbiD family. As to quaternary structure, homohexamer. Requires prenylated FMN as cofactor. It depends on Mn(2+) as a cofactor.

Its subcellular location is the cell membrane. The enzyme catalyses a 4-hydroxy-3-(all-trans-polyprenyl)benzoate + H(+) = a 2-(all-trans-polyprenyl)phenol + CO2. Its pathway is cofactor biosynthesis; ubiquinone biosynthesis. In terms of biological role, catalyzes the decarboxylation of 3-octaprenyl-4-hydroxy benzoate to 2-octaprenylphenol, an intermediate step in ubiquinone biosynthesis. The sequence is that of 3-octaprenyl-4-hydroxybenzoate carboxy-lyase from Aromatoleum aromaticum (strain DSM 19018 / LMG 30748 / EbN1) (Azoarcus sp. (strain EbN1)).